The primary structure comprises 318 residues: Guanidinopropionase (318 aa).

6 residues coordinate Mn(2+): histidine 126, aspartate 148, histidine 150, aspartate 152, aspartate 240, and aspartate 242.

This sequence belongs to the arginase family. Agmatinase subfamily. In terms of assembly, homohexamer. Mn(2+) serves as cofactor.

The enzyme catalyses 3-guanidinopropanoate + H2O = urea + beta-alanine. Functionally, catalyzes the hydrolysis of 3-guanidinopropanoate to beta-alanine and urea. Possesses low activity against 4-guanidinobutanoate. Has no activity against arginine and agmatine. This Pseudomonas aeruginosa (strain ATCC 15692 / DSM 22644 / CIP 104116 / JCM 14847 / LMG 12228 / 1C / PRS 101 / PAO1) protein is Guanidinopropionase (gpuA).